The following is a 78-amino-acid chain: MSKVCQVTGKRPVTGNRVSHSNIKTKRRFEPNLHHHRFWVESEKRFVRLRVSSKGMRIIDKKGIDSVLADIRSRGNRV.

The protein belongs to the bacterial ribosomal protein bL28 family.

This chain is Large ribosomal subunit protein bL28, found in Alcanivorax borkumensis (strain ATCC 700651 / DSM 11573 / NCIMB 13689 / SK2).